Consider the following 144-residue polypeptide: MNPYEQYMQELAQQMRAELTENGFESLETSEDVSNYMKNVNEEDTTFVVINSTCGCAAGLARPAAVAVAEQNDKKPTNKITVFAGQDKEATQTMREYIQQVPSSPSYALFKGTELKHFIPREHIEGRDIQDICMDIKDAFDENC.

This sequence belongs to the bacilliredoxin family.

The chain is Bacilliredoxin SH1478 from Staphylococcus haemolyticus (strain JCSC1435).